An 862-amino-acid polypeptide reads, in one-letter code: Taxadiene synthase (862 aa).

Positions 613, 617, 757, 761, and 765 each coordinate Mg(2+). Residues 613–617 (DDMAD) carry the DDXXD motif motif.

It belongs to the terpene synthase family. Mg(2+) serves as cofactor.

It catalyses the reaction (2E,6E,10E)-geranylgeranyl diphosphate = taxa-4(5),11(12)-diene + diphosphate. It functions in the pathway alkaloid biosynthesis; taxol biosynthesis; taxa-4(20),11-dien-5alpha-ol from geranylgeranyl diphosphate: step 1/2. Its function is as follows. Catalyzes the cyclization of the ubiquitous isoprenoid intermediate geranylgeranyl diphosphate to taxa-4,11-diene, the parent olefin with a taxane skeleton. The chain is Taxadiene synthase (TDC1) from Taxus brevifolia (Pacific yew).